The chain runs to 366 residues: MSNYKLLTPGPLTTTKTVKQEMLKDRCTWDDDYKNVTQVIRKQLLNLAQVDEPHYTAVLMQGSGSFVVESVLTTAVGEDDKLLIITNGAYGERIVEMAKVLRLALVVYSVPYDKQPSSLEVQALLEKDASITHVAVVHCETTTGILNPIKEIGEVVYSFNKTFIVDAMSSFGGVPMDLSDLHIDFCISSANKCIQGVPGFGFVIAKTNILEKCKGQARSVALDLYSQWEVMKKDGKWRFTSPTHVVAAFAKALEELVEEGGVNARYQRYADNNLLLRSRLSVLGFEAYISEELQSPIITTYLFPHKEFSFEHFYQEMKKAGFVIYPGKLTDVDTFRIGNIGDIYEEDMQALCEVIENYMVVKNNEN.

K192 bears the N6-(pyridoxal phosphate)lysine mark.

Belongs to the class-V pyridoxal-phosphate-dependent aminotransferase family. PhnW subfamily. Homodimer. The cofactor is pyridoxal 5'-phosphate.

It catalyses the reaction (2-aminoethyl)phosphonate + pyruvate = phosphonoacetaldehyde + L-alanine. In terms of biological role, involved in phosphonate degradation. The chain is 2-aminoethylphosphonate--pyruvate transaminase (phnW) from Lysinibacillus sphaericus (strain C3-41).